Reading from the N-terminus, the 434-residue chain is MEKIIVRGGKRLNGTVRVEGAKNAVLPIIAAALLASDGKNVLSEVPVLSDVYTINEVLRHLNAEVVFENNQVTIDSSKELNIEAPFEYVRKMRASVQVMGPLLARNGRARIALPGGCAIGSRPIDQHLKGFEAMGAKVQVGNGFVEAYVEGELKGAKIYLDFPSVGATENIMSAATLAKGTTILENAAKEPEIVDLANFLNAMGAKVRGAGTGTIRIEGVDKLYGANHSIIPDRIEAGTFMVAAAITGGDILIENAVPEHLRSITAKMEEMGVKIIEENEGVRVIGPDKLKAVDIKTMPHPGFPTDMQSQMMALLLQADGTSMITETVFENRFMHVEEFRRMNADIKIEGRSVIMNGPNSLQGAEVAATDLRAAAALILAGLVSEGYTRVTELKHLDRGYVNFHKKLAALGATIERVNEKVEEVKEQEVSDLHA.

22–23 is a phosphoenolpyruvate binding site; sequence KN. A UDP-N-acetyl-alpha-D-glucosamine-binding site is contributed by R93. Residue C117 is the Proton donor of the active site. Position 117 is a 2-(S-cysteinyl)pyruvic acid O-phosphothioketal (C117). UDP-N-acetyl-alpha-D-glucosamine contacts are provided by residues 122–126, D306, and V328; that span reads RPIDQ.

This sequence belongs to the EPSP synthase family. MurA subfamily.

The protein localises to the cytoplasm. It catalyses the reaction phosphoenolpyruvate + UDP-N-acetyl-alpha-D-glucosamine = UDP-N-acetyl-3-O-(1-carboxyvinyl)-alpha-D-glucosamine + phosphate. The protein operates within cell wall biogenesis; peptidoglycan biosynthesis. Functionally, cell wall formation. Adds enolpyruvyl to UDP-N-acetylglucosamine. This is UDP-N-acetylglucosamine 1-carboxyvinyltransferase 1 from Bacillus cereus (strain ATCC 14579 / DSM 31 / CCUG 7414 / JCM 2152 / NBRC 15305 / NCIMB 9373 / NCTC 2599 / NRRL B-3711).